The primary structure comprises 379 residues: 1-deoxy-D-xylulose 5-phosphate reductoisomerase (379 aa).

Residues T10, G11, S12, I13, R38, N39, and N121 each coordinate NADPH. K122 contacts 1-deoxy-D-xylulose 5-phosphate. E123 is a binding site for NADPH. Mn(2+) is bound at residue D147. S148, E149, S173, and H196 together coordinate 1-deoxy-D-xylulose 5-phosphate. E149 lines the Mn(2+) pocket. G202 serves as a coordination point for NADPH. 4 residues coordinate 1-deoxy-D-xylulose 5-phosphate: S209, N214, K215, and E218. E218 serves as a coordination point for Mn(2+).

Belongs to the DXR family. Mg(2+) serves as cofactor. It depends on Mn(2+) as a cofactor.

It carries out the reaction 2-C-methyl-D-erythritol 4-phosphate + NADP(+) = 1-deoxy-D-xylulose 5-phosphate + NADPH + H(+). The protein operates within isoprenoid biosynthesis; isopentenyl diphosphate biosynthesis via DXP pathway; isopentenyl diphosphate from 1-deoxy-D-xylulose 5-phosphate: step 1/6. Its function is as follows. Catalyzes the NADPH-dependent rearrangement and reduction of 1-deoxy-D-xylulose-5-phosphate (DXP) to 2-C-methyl-D-erythritol 4-phosphate (MEP). This Chlamydia trachomatis serovar A (strain ATCC VR-571B / DSM 19440 / HAR-13) protein is 1-deoxy-D-xylulose 5-phosphate reductoisomerase.